The primary structure comprises 413 residues: uncharacterized protein (413 aa).

2 disordered regions span residues 108 to 158 (ESVP…SKIS) and 232 to 257 (DRLG…RLGA). Ser-115 carries the post-translational modification Phosphoserine. The segment covering 127-139 (SAASRMIANSLNH) has biased composition (polar residues). Ser-141 carries the post-translational modification Phosphoserine. A Glycyl lysine isopeptide (Lys-Gly) (interchain with G-Cter in SUMO2) cross-link involves residue Lys-239. Phosphoserine occurs at positions 269 and 296. The segment at 290–336 (RGPTKASAQPALTVKAKAASSATSTATTPKLRRLALPSRPGLQKKPD) is disordered. Residues 302–318 (TVKAKAASSATSTATTP) show a composition bias toward low complexity. Residue Ser-342 is modified to Phosphoserine.

This is an uncharacterized protein from Mus musculus (Mouse).